The primary structure comprises 157 residues: Endoribonuclease YbeY (157 aa).

The Zn(2+) site is built by His114, His118, and His124.

The protein belongs to the endoribonuclease YbeY family. Requires Zn(2+) as cofactor.

The protein resides in the cytoplasm. Functionally, single strand-specific metallo-endoribonuclease involved in late-stage 70S ribosome quality control and in maturation of the 3' terminus of the 16S rRNA. The chain is Endoribonuclease YbeY from Salmonella agona (strain SL483).